We begin with the raw amino-acid sequence, 412 residues long: DNA primase DnaG (412 aa).

In terms of domain architecture, Toprim spans 165–243 (PELIIVEGRA…KLDYVARAPT (79 aa)). Residues Glu-171, Asp-216, and Asp-218 each coordinate Mg(2+).

Belongs to the archaeal DnaG primase family. As to quaternary structure, forms a ternary complex with MCM helicase and DNA. Component of the archaeal exosome complex. Requires Mg(2+) as cofactor.

It carries out the reaction ssDNA + n NTP = ssDNA/pppN(pN)n-1 hybrid + (n-1) diphosphate.. RNA polymerase that catalyzes the synthesis of short RNA molecules used as primers for DNA polymerase during DNA replication. Also part of the exosome, which is a complex involved in RNA degradation. Acts as a poly(A)-binding protein that enhances the interaction between heteromeric, adenine-rich transcripts and the exosome. The sequence is that of DNA primase DnaG from Sulfolobus acidocaldarius (strain ATCC 33909 / DSM 639 / JCM 8929 / NBRC 15157 / NCIMB 11770).